Reading from the N-terminus, the 150-residue chain is UPF0336 protein SCO4636 (150 aa).

Residues 8–116 (VGRSYPPTAP…STIEAIKSMA (109 aa)) form the MaoC-like domain.

This sequence belongs to the UPF0336 family.

In Streptomyces coelicolor (strain ATCC BAA-471 / A3(2) / M145), this protein is UPF0336 protein SCO4636.